Reading from the N-terminus, the 185-residue chain is NADH-quinone oxidoreductase subunit B (185 aa).

Cys-37, Cys-38, Cys-103, and Cys-132 together coordinate [4Fe-4S] cluster.

Belongs to the complex I 20 kDa subunit family. NDH-1 is composed of 14 different subunits. Subunits NuoB, C, D, E, F, and G constitute the peripheral sector of the complex. It depends on [4Fe-4S] cluster as a cofactor.

The protein localises to the cell membrane. The enzyme catalyses a quinone + NADH + 5 H(+)(in) = a quinol + NAD(+) + 4 H(+)(out). Functionally, NDH-1 shuttles electrons from NADH, via FMN and iron-sulfur (Fe-S) centers, to quinones in the respiratory chain. The immediate electron acceptor for the enzyme in this species is believed to be a menaquinone. Couples the redox reaction to proton translocation (for every two electrons transferred, four hydrogen ions are translocated across the cytoplasmic membrane), and thus conserves the redox energy in a proton gradient. The polypeptide is NADH-quinone oxidoreductase subunit B (Thermobifida fusca (strain YX)).